A 389-amino-acid polypeptide reads, in one-letter code: S-adenosylmethionine synthase (389 aa).

H15 provides a ligand contact to ATP. D17 is a binding site for Mg(2+). Residue E43 coordinates K(+). Positions 56 and 99 each coordinate L-methionine. The tract at residues 99–109 (QSPDIAQGVNE) is flexible loop. Residues 166–168 (DAK), 234–235 (RF), D243, 249–250 (RK), A266, and K270 each bind ATP. L-methionine is bound at residue D243. Residue K274 participates in L-methionine binding.

The protein belongs to the AdoMet synthase family. Homotetramer; dimer of dimers. Mg(2+) serves as cofactor. It depends on K(+) as a cofactor.

The protein localises to the cytoplasm. It catalyses the reaction L-methionine + ATP + H2O = S-adenosyl-L-methionine + phosphate + diphosphate. Its pathway is amino-acid biosynthesis; S-adenosyl-L-methionine biosynthesis; S-adenosyl-L-methionine from L-methionine: step 1/1. In terms of biological role, catalyzes the formation of S-adenosylmethionine (AdoMet) from methionine and ATP. The overall synthetic reaction is composed of two sequential steps, AdoMet formation and the subsequent tripolyphosphate hydrolysis which occurs prior to release of AdoMet from the enzyme. The polypeptide is S-adenosylmethionine synthase (Neisseria meningitidis serogroup A / serotype 4A (strain DSM 15465 / Z2491)).